The primary structure comprises 142 residues: UPF0102 protein Bcep18194_A3391 (142 aa).

Positions 1–27 (MCHAAPARPGDGRGLPRAGDNFSGAAR) are disordered.

The protein belongs to the UPF0102 family.

This is UPF0102 protein Bcep18194_A3391 from Burkholderia lata (strain ATCC 17760 / DSM 23089 / LMG 22485 / NCIMB 9086 / R18194 / 383).